The following is a 233-amino-acid chain: Probable 2-phosphosulfolactate phosphatase (233 aa).

It belongs to the ComB family. The cofactor is Mg(2+).

The catalysed reaction is (2R)-O-phospho-3-sulfolactate + H2O = (2R)-3-sulfolactate + phosphate. This chain is Probable 2-phosphosulfolactate phosphatase, found in Clostridium tetani (strain Massachusetts / E88).